Reading from the N-terminus, the 660-residue chain is Kinesin-like protein KIF22 (660 aa).

The disordered stretch occupies residues 1 to 31 (MSLRAKTCPQRREMASATSGPGRCVSKGGLG). One can recognise a Kinesin motor domain in the interval 38-363 (RVRVAVRLRP…LNFTARSKEV (326 aa)). ATP is bound at residue 122–129 (GPTGAGKT). The interval 391 to 418 (PSEAKKAKGPEEESTGSPESTAAPASAS) is disordered. Residues 405–418 (TGSPESTAAPASAS) are compositionally biased toward low complexity. Phosphoserine is present on residues Ser-407, Ser-422, and Ser-447. Lys-460 participates in a covalent cross-link: Glycyl lysine isopeptide (Lys-Gly) (interchain with G-Cter in SUMO2). Residues 460–505 (KRERMVLMKTVEEKNLEIERLKMKQKELEAKVLAQEAPDPREKENT) are a coiled coil. 2 disordered regions span residues 493–516 (AQEAPDPREKENTPTILQPPASYS) and 534–567 (IQKQRESSNQIQLLKKGPKRKLEPSPESEAVEKD). Residues 505-516 (TPTILQPPASYS) are compositionally biased toward polar residues. Phosphoserine occurs at positions 540 and 576.

It belongs to the TRAFAC class myosin-kinesin ATPase superfamily. Kinesin family. As to quaternary structure, interacts with FAM83D and SIAH1. Ubiquitinated; mediated by SIAH1 and leading to its subsequent proteasomal degradation.

It is found in the nucleus. The protein resides in the cytoplasm. The protein localises to the cytoskeleton. Its function is as follows. Kinesin family member that is involved in spindle formation and the movements of chromosomes during mitosis and meiosis. Binds to microtubules and to DNA. Plays a role in congression of laterally attached chromosomes in NDC80-depleted cells. This Mus musculus (Mouse) protein is Kinesin-like protein KIF22 (Kif22).